A 299-amino-acid chain; its full sequence is Ribosomal protein L11 methyltransferase (299 aa).

Residues Thr-144, Gly-165, Asp-187, and Asn-229 each coordinate S-adenosyl-L-methionine.

The protein belongs to the methyltransferase superfamily. PrmA family.

It is found in the cytoplasm. The enzyme catalyses L-lysyl-[protein] + 3 S-adenosyl-L-methionine = N(6),N(6),N(6)-trimethyl-L-lysyl-[protein] + 3 S-adenosyl-L-homocysteine + 3 H(+). Methylates ribosomal protein L11. This is Ribosomal protein L11 methyltransferase from Teredinibacter turnerae (strain ATCC 39867 / T7901).